Here is a 277-residue protein sequence, read N- to C-terminus: NH(3)-dependent NAD(+) synthetase (277 aa).

36 to 43 (GLSGGIDS) serves as a coordination point for ATP. Position 42 (D42) interacts with Mg(2+). R118 lines the deamido-NAD(+) pocket. Residue T138 participates in ATP binding. Mg(2+) is bound at residue E143. ATP contacts are provided by K167 and S189.

This sequence belongs to the NAD synthetase family. Homodimer.

It carries out the reaction deamido-NAD(+) + NH4(+) + ATP = AMP + diphosphate + NAD(+) + H(+). It functions in the pathway cofactor biosynthesis; NAD(+) biosynthesis; NAD(+) from deamido-NAD(+) (ammonia route): step 1/1. Catalyzes the ATP-dependent amidation of deamido-NAD to form NAD. Uses ammonia as a nitrogen source. In Chlorobium phaeovibrioides (strain DSM 265 / 1930) (Prosthecochloris vibrioformis (strain DSM 265)), this protein is NH(3)-dependent NAD(+) synthetase.